Here is a 388-residue protein sequence, read N- to C-terminus: Pepsin F (388 aa).

Positions 1-15 (MKWLGLLGLVALSEC) are cleaved as a signal peptide. Residues 16–58 (LVTIPLMKVKSMRENLRENDILLDYLEKHPYRPTYKLLSGQQD) constitute a propeptide, activation peptide. In terms of domain architecture, Peptidase A1 spans 74 to 385 (YIGIISIGTP…DRANNRIGLA (312 aa)). D92 is an active-site residue. Intrachain disulfides connect C105–C110 and C266–C270. The active site involves D275. C309 and C343 are joined by a disulfide.

It belongs to the peptidase A1 family.

The protein resides in the secreted. It carries out the reaction Preferential cleavage: hydrophobic, preferably aromatic, residues in P1 and P1' positions. Cleaves 1-Phe-|-Val-2, 4-Gln-|-His-5, 13-Glu-|-Ala-14, 14-Ala-|-Leu-15, 15-Leu-|-Tyr-16, 16-Tyr-|-Leu-17, 23-Gly-|-Phe-24, 24-Phe-|-Phe-25 and 25-Phe-|-Tyr-26 bonds in the B chain of insulin.. Shows particularly broad specificity; although bonds involving phenylalanine and leucine are preferred, many others are also cleaved to some extent. This chain is Pepsin F, found in Oryctolagus cuniculus (Rabbit).